Reading from the N-terminus, the 167-residue chain is S-ribosylhomocysteine lyase (167 aa).

Residues H54, H58, and C128 each contribute to the Fe cation site.

The protein belongs to the LuxS family. As to quaternary structure, homodimer. Fe cation is required as a cofactor.

The enzyme catalyses S-(5-deoxy-D-ribos-5-yl)-L-homocysteine = (S)-4,5-dihydroxypentane-2,3-dione + L-homocysteine. Its function is as follows. Involved in the synthesis of autoinducer 2 (AI-2) which is secreted by bacteria and is used to communicate both the cell density and the metabolic potential of the environment. The regulation of gene expression in response to changes in cell density is called quorum sensing. Catalyzes the transformation of S-ribosylhomocysteine (RHC) to homocysteine (HC) and 4,5-dihydroxy-2,3-pentadione (DPD). The polypeptide is S-ribosylhomocysteine lyase (Sulfurimonas denitrificans (strain ATCC 33889 / DSM 1251) (Thiomicrospira denitrificans (strain ATCC 33889 / DSM 1251))).